The sequence spans 165 residues: Transcription factor TCP16 (165 aa).

Positions 1 to 11 (MDSKNGINNSQ) are enriched in polar residues. Disordered stretches follow at residues 1-21 (MDSK…KDRH) and 146-165 (GNAT…TTTV). Residues 12–21 (KARRTPKDRH) show a composition bias toward basic residues. Residues 17–71 (PKDRHLKIGGRDRRIRIPPSVAPQLFRLTKELGFKTDGETVSWLLQNAEPAIFAA) form the TCP domain. Positions 148–165 (ATASDTTSAATTTATTTV) are enriched in low complexity.

As to expression, mostly in anther in young buds.

Its subcellular location is the nucleus. In terms of biological role, required during early processes in pollen development. This is Transcription factor TCP16 (TCP16) from Arabidopsis thaliana (Mouse-ear cress).